Here is a 660-residue protein sequence, read N- to C-terminus: Probable serine/threonine-protein kinase CE0033 (660 aa).

Residues 9 to 278 (YELGASIGSG…AEMAADLELL (270 aa)) enclose the Protein kinase domain. ATP is bound by residues 15–23 (IGSGGMSEV) and Lys38. Asp136 (proton acceptor) is an active-site residue. The disordered stretch occupies residues 288–319 (RAHVEKPDEPETVVVPQRLSTPPPPPTPAMPA). PASTA domains lie at 377 to 443 (SAST…TISS), 444 to 512 (GREV…TVST), and 513 to 577 (GPSL…EISN).

Belongs to the protein kinase superfamily. Ser/Thr protein kinase family.

It catalyses the reaction L-seryl-[protein] + ATP = O-phospho-L-seryl-[protein] + ADP + H(+). The enzyme catalyses L-threonyl-[protein] + ATP = O-phospho-L-threonyl-[protein] + ADP + H(+). The polypeptide is Probable serine/threonine-protein kinase CE0033 (Corynebacterium efficiens (strain DSM 44549 / YS-314 / AJ 12310 / JCM 11189 / NBRC 100395)).